The primary structure comprises 878 residues: Aminopeptidase M1-A (878 aa).

Residues 105–212 (VGEGTLVIAF…MSTYLVAVIV (108 aa)) form a required for membrane association region. Substrate contacts are provided by residues Glu-145 and 278–282 (GAMEN). His-314 provides a ligand contact to Zn(2+). Glu-315 (proton acceptor) is an active-site residue. The Zn(2+) site is built by His-318 and Glu-337. The Dileucine internalization motif motif lies at 727-728 (LL).

It belongs to the peptidase M1 family. As to quaternary structure, homodimer. Requires Zn(2+) as cofactor.

It is found in the membrane. The protein resides in the microsome membrane. It localises to the cytoplasm. The catalysed reaction is Release of an N-terminal amino acid, Xaa-|-Yaa- from a peptide, amide or arylamide. Xaa is preferably Ala, but may be most amino acids including Pro (slow action). When a terminal hydrophobic residue is followed by a prolyl residue, the two may be released as an intact Xaa-Pro dipeptide.. The sequence is that of Aminopeptidase M1-A from Oryza sativa subsp. japonica (Rice).